Reading from the N-terminus, the 128-residue chain is Saitohin (128 aa).

Residues Ser-77–Gly-87 show a composition bias toward polar residues. A disordered region spans residues Ser-77–Val-128.

In terms of assembly, interacts with PRDX6.

Its subcellular location is the cytoplasm. The protein localises to the nucleus. This chain is Saitohin (STH), found in Pan troglodytes (Chimpanzee).